A 399-amino-acid chain; its full sequence is Acetate kinase (399 aa).

Mg(2+) is bound at residue N9. An ATP-binding site is contributed by K16. Position 90 (R90) interacts with substrate. D147 acts as the Proton donor/acceptor in catalysis. ATP contacts are provided by residues 207-211 (HIGNG), 282-284 (DLR), and 330-334 (GVGEN). E384 provides a ligand contact to Mg(2+).

It belongs to the acetokinase family. In terms of assembly, homodimer. Requires Mg(2+) as cofactor. Mn(2+) serves as cofactor.

Its subcellular location is the cytoplasm. It catalyses the reaction acetate + ATP = acetyl phosphate + ADP. Its pathway is metabolic intermediate biosynthesis; acetyl-CoA biosynthesis; acetyl-CoA from acetate: step 1/2. Its function is as follows. Catalyzes the formation of acetyl phosphate from acetate and ATP. Can also catalyze the reverse reaction. The sequence is that of Acetate kinase from Staphylococcus saprophyticus subsp. saprophyticus (strain ATCC 15305 / DSM 20229 / NCIMB 8711 / NCTC 7292 / S-41).